Consider the following 51-residue polypeptide: Insulin (51 aa).

3 disulfides stabilise this stretch: cysteine 7/cysteine 37, cysteine 19/cysteine 50, and cysteine 36/cysteine 41.

The protein belongs to the insulin family. As to quaternary structure, heterodimer of a B chain and an A chain linked by two disulfide bonds.

It localises to the secreted. Its function is as follows. Insulin decreases blood glucose concentration. It increases cell permeability to monosaccharides, amino acids and fatty acids. It accelerates glycolysis, the pentose phosphate cycle, and glycogen synthesis in liver. The polypeptide is Insulin (INS) (Camelus dromedarius (Dromedary)).